The primary structure comprises 456 residues: UDP-N-acetylmuramoylalanine--D-glutamate ligase (456 aa).

An ATP-binding site is contributed by Gly-122–Thr-128.

It belongs to the MurCDEF family.

The protein localises to the cytoplasm. It catalyses the reaction UDP-N-acetyl-alpha-D-muramoyl-L-alanine + D-glutamate + ATP = UDP-N-acetyl-alpha-D-muramoyl-L-alanyl-D-glutamate + ADP + phosphate + H(+). It participates in cell wall biogenesis; peptidoglycan biosynthesis. Its function is as follows. Cell wall formation. Catalyzes the addition of glutamate to the nucleotide precursor UDP-N-acetylmuramoyl-L-alanine (UMA). The chain is UDP-N-acetylmuramoylalanine--D-glutamate ligase from Saccharophagus degradans (strain 2-40 / ATCC 43961 / DSM 17024).